A 342-amino-acid chain; its full sequence is Holliday junction branch migration complex subunit RuvB (342 aa).

The interval 1–22 (MTLKPVREVSPGSQEGEERLEQ) is disordered. Positions 1-185 (MTLKPVREVS…FPIQERLGYY (185 aa)) are large ATPase domain (RuvB-L). Residues L24, R25, G66, K69, T70, S71, 132–134 (EDY), R175, Y185, and R222 each bind ATP. Residue T70 participates in Mg(2+) binding. Positions 186–256 (EPTELREIAV…IVETTLERLE (71 aa)) are small ATPAse domain (RuvB-S). Positions 259–342 (GRGLDAMDRR…RPQGKQGSLI (84 aa)) are head domain (RuvB-H). Positions 295, 314, and 319 each coordinate DNA.

This sequence belongs to the RuvB family. Homohexamer. Forms an RuvA(8)-RuvB(12)-Holliday junction (HJ) complex. HJ DNA is sandwiched between 2 RuvA tetramers; dsDNA enters through RuvA and exits via RuvB. An RuvB hexamer assembles on each DNA strand where it exits the tetramer. Each RuvB hexamer is contacted by two RuvA subunits (via domain III) on 2 adjacent RuvB subunits; this complex drives branch migration. In the full resolvosome a probable DNA-RuvA(4)-RuvB(12)-RuvC(2) complex forms which resolves the HJ.

It is found in the cytoplasm. It carries out the reaction ATP + H2O = ADP + phosphate + H(+). Its function is as follows. The RuvA-RuvB-RuvC complex processes Holliday junction (HJ) DNA during genetic recombination and DNA repair, while the RuvA-RuvB complex plays an important role in the rescue of blocked DNA replication forks via replication fork reversal (RFR). RuvA specifically binds to HJ cruciform DNA, conferring on it an open structure. The RuvB hexamer acts as an ATP-dependent pump, pulling dsDNA into and through the RuvAB complex. RuvB forms 2 homohexamers on either side of HJ DNA bound by 1 or 2 RuvA tetramers; 4 subunits per hexamer contact DNA at a time. Coordinated motions by a converter formed by DNA-disengaged RuvB subunits stimulates ATP hydrolysis and nucleotide exchange. Immobilization of the converter enables RuvB to convert the ATP-contained energy into a lever motion, pulling 2 nucleotides of DNA out of the RuvA tetramer per ATP hydrolyzed, thus driving DNA branch migration. The RuvB motors rotate together with the DNA substrate, which together with the progressing nucleotide cycle form the mechanistic basis for DNA recombination by continuous HJ branch migration. Branch migration allows RuvC to scan DNA until it finds its consensus sequence, where it cleaves and resolves cruciform DNA. The chain is Holliday junction branch migration complex subunit RuvB from Anaeromyxobacter sp. (strain Fw109-5).